A 266-amino-acid polypeptide reads, in one-letter code: Lipooligosaccharide biosynthesis protein lic2B (266 aa).

The protein belongs to the glycosyltransferase 25 family.

In terms of biological role, involved in extracellular lipooligosaccharide (LOS) biosynthesis and virulence expression. Involved in the synthesis of the oligosaccharide moiety of the LOS molecule by adding GalNAc. This Haemophilus influenzae protein is Lipooligosaccharide biosynthesis protein lic2B (lic2B).